The following is a 305-amino-acid chain: Tetraspanin-12 (305 aa).

Over 1-12 (MAREDSVKCLRC) the chain is Cytoplasmic. 2 S-palmitoyl cysteine lipidation sites follow: Cys-9 and Cys-12. A helical membrane pass occupies residues 13 to 33 (LLYALNLLFWLMSISVLAVSA). The Extracellular portion of the chain corresponds to 34-59 (WMRDYLNNVLTLTAETRVEEAVILTY). Residues 60–80 (FPVVHPVMIAVCCFLIIVGML) traverse the membrane as a helical segment. At 81–89 (GYCGTVKRN) the chain is on the cytoplasmic side. Cys-83 carries the S-palmitoyl cysteine lipid modification. Residues 90–110 (LLLLAWYFGSLLVIFCVELAC) form a helical membrane-spanning segment. Topologically, residues 111–224 (GVWTYEQELM…RGTKQLQVLR (114 aa)) are extracellular. Residues 225 to 245 (FLGISIGVTQILAMILTITLL) traverse the membrane as a helical segment. The Cytoplasmic segment spans residues 246–305 (WALYYDRREPGTDQMMSLKNDNSQHLSCPSVELLKPSLSRIFEHTSMANSFNTHFEMEEL).

This sequence belongs to the tetraspanin (TM4SF) family. Component of a complex, at least composed of TSPAN12, FZD4 and norrin (NDP). Interacts (when palmitoylated) with ADAM10. Interacts with MMP14/MT1-MMP. Post-translationally, palmitoylated; required for interaction with ADAM10. The precise position of palmitoylated residues is unclear and occurs either on Cys-9, Cys-12 and/or Cys-83.

The protein localises to the cell membrane. Regulator of cell surface receptor signal transduction. Plays a central role in retinal vascularization by regulating norrin (NDP) signal transduction. Acts in concert with norrin (NDP) to promote FZD4 multimerization and subsequent activation of FZD4, leading to promote accumulation of beta-catenin (CTNNB1) and stimulate LEF/TCF-mediated transcriptional programs. Suprisingly, it only activates the norrin (NDP)-dependent activation of FZD4, while it does not activate the Wnt-dependent activation of FZD4, suggesting the existence of a Wnt-independent signaling that also promote accumulation the beta-catenin (CTNNB1). Acts as a regulator of membrane proteinases such as ADAM10 and MMP14/MT1-MMP. Activates ADAM10-dependent cleavage activity of amyloid precursor protein (APP). Activates MMP14/MT1-MMP-dependent cleavage activity. This is Tetraspanin-12 (TSPAN12) from Homo sapiens (Human).